The following is a 109-amino-acid chain: Enhancer of rudimentary homolog (109 aa).

This sequence belongs to the E(R) family. In terms of assembly, homodimer.

In terms of biological role, may have a role in the cell cycle. This chain is Enhancer of rudimentary homolog, found in Arabidopsis thaliana (Mouse-ear cress).